The sequence spans 148 residues: MKLDVKILDARLHEQLPQYATTGSAGLDLRACVDAPLTIEPGTTHLIPTGMAIHLADPGYAALILPRSGMGHKHGIVLGNLVGLIDSDYQGQLMVSTWNRGSTAFVLNPMERLAQLVIVPVVQAELNIVDDFAESERGAGGFGSTGRH.

Substrate is bound by residues 67–69 (RSG), Asn-80, 84–86 (LID), and Met-94.

The protein belongs to the dUTPase family. Requires Mg(2+) as cofactor.

The enzyme catalyses dUTP + H2O = dUMP + diphosphate + H(+). It functions in the pathway pyrimidine metabolism; dUMP biosynthesis; dUMP from dCTP (dUTP route): step 2/2. This enzyme is involved in nucleotide metabolism: it produces dUMP, the immediate precursor of thymidine nucleotides and it decreases the intracellular concentration of dUTP so that uracil cannot be incorporated into DNA. This Ralstonia pickettii (strain 12J) protein is Deoxyuridine 5'-triphosphate nucleotidohydrolase.